We begin with the raw amino-acid sequence, 324 residues long: tRNA dimethylallyltransferase (324 aa).

17–24 (GPTASGKT) contributes to the ATP binding site. Residue 19–24 (TASGKT) coordinates substrate. Interaction with substrate tRNA stretches follow at residues 42–45 (DSAL), 166–170 (QRIQR), and 251–256 (RCVGYR).

This sequence belongs to the IPP transferase family. Monomer. The cofactor is Mg(2+).

It carries out the reaction adenosine(37) in tRNA + dimethylallyl diphosphate = N(6)-dimethylallyladenosine(37) in tRNA + diphosphate. Its function is as follows. Catalyzes the transfer of a dimethylallyl group onto the adenine at position 37 in tRNAs that read codons beginning with uridine, leading to the formation of N6-(dimethylallyl)adenosine (i(6)A). The sequence is that of tRNA dimethylallyltransferase from Burkholderia mallei (strain NCTC 10247).